The following is a 72-amino-acid chain: Translation initiation factor IF-1 (72 aa).

The region spanning 1–72 (MSKDDSIEFE…TKGRITYRMK (72 aa)) is the S1-like domain.

Belongs to the IF-1 family. As to quaternary structure, component of the 30S ribosomal translation pre-initiation complex which assembles on the 30S ribosome in the order IF-2 and IF-3, IF-1 and N-formylmethionyl-tRNA(fMet); mRNA recruitment can occur at any time during PIC assembly.

The protein localises to the cytoplasm. Its function is as follows. One of the essential components for the initiation of protein synthesis. Stabilizes the binding of IF-2 and IF-3 on the 30S subunit to which N-formylmethionyl-tRNA(fMet) subsequently binds. Helps modulate mRNA selection, yielding the 30S pre-initiation complex (PIC). Upon addition of the 50S ribosomal subunit IF-1, IF-2 and IF-3 are released leaving the mature 70S translation initiation complex. The polypeptide is Translation initiation factor IF-1 (Xanthomonas euvesicatoria pv. vesicatoria (strain 85-10) (Xanthomonas campestris pv. vesicatoria)).